The following is a 579-amino-acid chain: Chromosomal replication initiator protein DnaA (579 aa).

The tract at residues 1–71 (MQDFWQAAAA…TALACEYWET (71 aa)) is domain I, interacts with DnaA modulators. The segment at 71 to 242 (TQVSVHFVLD…QQSDTVHERS (172 aa)) is domain II. 2 disordered regions span residues 131–196 (AGAQ…SAAH) and 212–240 (EASARSYRVPSPQPAAPAGAQQQSDTVHE). The segment covering 171–183 (SQSQQSAQGRGAA) has biased composition (low complexity). The segment at 243 to 459 (RLNPILTFDN…GALRKILAFS (217 aa)) is domain III, AAA+ region. Residues glycine 287, glycine 289, lysine 290, and threonine 291 each contribute to the ATP site. Positions 460 to 579 (NFHGKDITID…LHVLEQTLKG (120 aa)) are domain IV, binds dsDNA.

Belongs to the DnaA family. In terms of assembly, oligomerizes as a right-handed, spiral filament on DNA at oriC.

It is found in the cytoplasm. Functionally, plays an essential role in the initiation and regulation of chromosomal replication. ATP-DnaA binds to the origin of replication (oriC) to initiate formation of the DNA replication initiation complex once per cell cycle. Binds the DnaA box (a 9 base pair repeat at the origin) and separates the double-stranded (ds)DNA. Forms a right-handed helical filament on oriC DNA; dsDNA binds to the exterior of the filament while single-stranded (ss)DNA is stabiized in the filament's interior. The ATP-DnaA-oriC complex binds and stabilizes one strand of the AT-rich DNA unwinding element (DUE), permitting loading of DNA polymerase. After initiation quickly degrades to an ADP-DnaA complex that is not apt for DNA replication. Binds acidic phospholipids. This Cupriavidus metallidurans (strain ATCC 43123 / DSM 2839 / NBRC 102507 / CH34) (Ralstonia metallidurans) protein is Chromosomal replication initiator protein DnaA.